A 126-amino-acid polypeptide reads, in one-letter code: Small ribosomal subunit protein uS13 (126 aa).

Residues 92-126 (HRMGLPVRGQRTRTNARTRRGRRQTVAGKKKAPGK) are disordered. Basic residues predominate over residues 101 to 126 (QRTRTNARTRRGRRQTVAGKKKAPGK).

The protein belongs to the universal ribosomal protein uS13 family. In terms of assembly, part of the 30S ribosomal subunit. Forms a loose heterodimer with protein S19. Forms two bridges to the 50S subunit in the 70S ribosome.

Its function is as follows. Located at the top of the head of the 30S subunit, it contacts several helices of the 16S rRNA. In the 70S ribosome it contacts the 23S rRNA (bridge B1a) and protein L5 of the 50S subunit (bridge B1b), connecting the 2 subunits; these bridges are implicated in subunit movement. Contacts the tRNAs in the A and P-sites. This chain is Small ribosomal subunit protein uS13, found in Nostoc sp. (strain PCC 7120 / SAG 25.82 / UTEX 2576).